A 1454-amino-acid chain; its full sequence is Serine/threonine-protein kinase VPS15 (1454 aa).

Glycine 2 carries N-myristoyl glycine lipidation. The region spanning 27 to 300 is the Protein kinase domain; sequence VHYVSQLNSS…LLNKYRGIFF (274 aa). Residues 33–41 and lysine 54 each bind ATP; that span reads LNSSRFLKT. Aspartate 147 (proton acceptor) is an active-site residue. HEAT repeat units lie at residues 460-497, 576-613, 615-652, and 654-691; these read NKID…SVRK, KLIQ…FFGR, RTND…LLGT, and TLEQ…TGLI. 6 WD repeats span residues 1078–1118, 1126–1165, 1229–1268, 1275–1315, 1344–1382, and 1422–1454; these read NEPN…VGEV, DCSS…QESE, PRHG…LIRS, APIT…CQYA, RSLN…SSKA, and YHHD…GIFQ.

Belongs to the protein kinase superfamily. Ser/Thr protein kinase family. In terms of assembly, component of the autophagy-specific VPS34 PI3-kinase complex I composed of VPS15, VPS30, VPS34, ATG14 and ATG38; and of the VPS34 PI3-kinase complex II composed of VPS15, VPS30, VPS34 and VPS38. Interacts directly with ATG14 and GPA1. Interacts directly with VPS34. In terms of processing, autophosphorylated.

It localises to the golgi apparatus. It is found in the trans-Golgi network membrane. The protein localises to the endosome membrane. The catalysed reaction is L-seryl-[protein] + ATP = O-phospho-L-seryl-[protein] + ADP + H(+). It carries out the reaction L-threonyl-[protein] + ATP = O-phospho-L-threonyl-[protein] + ADP + H(+). In terms of biological role, serine/threonine-protein kinase required for cytoplasm to vacuole transport (Cvt) and autophagy as a part of the autophagy-specific VPS34 PI3-kinase complex I. This complex is essential to recruit the ATG8-phosphatidylinositol conjugate and the ATG12-ATG5 conjugate to the pre-autophagosomal structure. Is also involved in endosome-to-Golgi retrograde transport as part of the VPS34 PI3-kinase complex II. This second complex is required for the endosome-to-Golgi retrieval of PEP1 and KEX2, and the recruitment of VPS5 and VPS7, two components of the retromer complex, to endosomal membranes (probably through the synthesis of a specific pool of phosphatidylinositol 3-phosphate recruiting the retromer to the endosomes). By regulating VPS34 kinase activity, VPS15 appears to be essential for the efficient delivery of soluble hydrolases to the yeast vacuole. May function as a G protein beta subunit to propagate the pheromone response at the endosome with GPA1. This Saccharomyces cerevisiae (strain ATCC 204508 / S288c) (Baker's yeast) protein is Serine/threonine-protein kinase VPS15.